Consider the following 198-residue polypeptide: Protein GrpE (198 aa).

Residues 1-56 form a disordered region; the sequence is MVEKKKSQAEKNNQSATEEEIEKAVKGSKRDSNAADEKNSASAAASSSAVSDAEPA. Positions 22–39 are enriched in basic and acidic residues; it reads EKAVKGSKRDSNAADEKN. Over residues 40 to 56 the composition is skewed to low complexity; that stretch reads SASAAASSSAVSDAEPA.

This sequence belongs to the GrpE family. Homodimer.

It is found in the cytoplasm. Participates actively in the response to hyperosmotic and heat shock by preventing the aggregation of stress-denatured proteins, in association with DnaK and GrpE. It is the nucleotide exchange factor for DnaK and may function as a thermosensor. Unfolded proteins bind initially to DnaJ; upon interaction with the DnaJ-bound protein, DnaK hydrolyzes its bound ATP, resulting in the formation of a stable complex. GrpE releases ADP from DnaK; ATP binding to DnaK triggers the release of the substrate protein, thus completing the reaction cycle. Several rounds of ATP-dependent interactions between DnaJ, DnaK and GrpE are required for fully efficient folding. The chain is Protein GrpE from Oenococcus oeni (strain ATCC BAA-331 / PSU-1).